Reading from the N-terminus, the 359-residue chain is Trans-enoyl reductase RAP1 (359 aa).

Residue 49 to 52 participates in NADP(+) binding; that stretch reads CDFK. Residue 137-144 coordinates substrate; it reads TCIATACM. NADP(+) is bound by residues 195-198, Tyr-213, and 260-261; these read SPKN and LE. 281–285 contributes to the substrate binding site; that stretch reads GQMIL. Position 350-351 (350-351) interacts with NADP(+); sequence VA.

The protein belongs to the zinc-containing alcohol dehydrogenase family. Monomer.

The protein operates within secondary metabolite biosynthesis. Its function is as follows. Trans-enoyl reductase; part of the gene cluster that mediates the biosynthesis of a tyrosine-derived cytochalasan acting as a fungal signal recognized by resistant rice plants and leads to avirulence in Pi33 resistant rice cultivars. The first step in the pathway is catalyzed by the hybrid PKS-NRPS ACE1, assisted by the enoyl reductase RAP1, that are responsible for fusion of the tyrosine precursor and the polyketide backbone. The polyketide synthase module (PKS) of ACE1 is responsible for the synthesis of the polyketide backbone and the downstream nonribosomal peptide synthetase (NRPS) amidates the carboxyl end of the polyketide with the tyrosine precursor. Because ACE1 lacks a designated enoylreductase (ER) domain, the required activity is provided the enoyl reductase RAP1. Reduction by the hydrolyase ORFZ, followed by dehydration and intra-molecular Diels-Alder cyclization by the Diels-Alderase ORF3 then yield the required isoindolone-fused macrocycle. A number of oxidative steps catalyzed by the tailoring enzymes identified within the cluster, including cytochrome P450 monooxygenases CYP1 to CYP4, the FAD-linked oxidoreductase OXR2 and the short-chain dehydrogenase/reductase OXR1, are further required to afford the final cytochalasans that confer avirulence and which have still to be identified. The monooxygenase CYP1 has been shown to be a site-selective C-18 hydroxylase whereas the function of CYP3 is the site-selective epoxidation of the C-6/C-7 olefin that is present in some intermediate compounds. Finally, SYN2 and RAP2 are not required for avirulence in Pi33 resistant rice cultivars. The chain is Trans-enoyl reductase RAP1 from Pyricularia oryzae (strain 70-15 / ATCC MYA-4617 / FGSC 8958) (Rice blast fungus).